The chain runs to 117 residues: Small ribosomal subunit protein bS6 (117 aa).

This sequence belongs to the bacterial ribosomal protein bS6 family.

Binds together with bS18 to 16S ribosomal RNA. The protein is Small ribosomal subunit protein bS6 of Trichodesmium erythraeum (strain IMS101).